A 286-amino-acid polypeptide reads, in one-letter code: UPF0173 metal-dependent hydrolase RALTA_A1748 (286 aa).

The protein belongs to the UPF0173 family.

The polypeptide is UPF0173 metal-dependent hydrolase RALTA_A1748 (Cupriavidus taiwanensis (strain DSM 17343 / BCRC 17206 / CCUG 44338 / CIP 107171 / LMG 19424 / R1) (Ralstonia taiwanensis (strain LMG 19424))).